Reading from the N-terminus, the 546-residue chain is Coatomer subunit delta (546 aa).

Positions 190-440 (NRFMGSKDPN…VIFTIPVFPQ (251 aa)) are interaction with DSL1. Positions 236–287 (PMATSQRAGHSATGGMKLGGGAGRRAGAAPRPSAISSASSGTPPPPEEDVPE) are disordered. Over residues 260–276 (RAGAAPRPSAISSASSG) the composition is skewed to low complexity. The residue at position 277 (Thr-277) is a Phosphothreonine. The MHD domain maps to 288–546 (NNGILISIKE…SLKSDEYLVQ (259 aa)).

It belongs to the adaptor complexes medium subunit family. Delta-COP subfamily. In terms of assembly, oligomeric complex that consists of at least the alpha, beta, beta', gamma, delta, epsilon and zeta subunits. Interacts with DSL1.

The protein resides in the cytoplasm. The protein localises to the golgi apparatus membrane. It is found in the cytoplasmic vesicle. Its subcellular location is the COPI-coated vesicle membrane. Functionally, the coatomer is a cytosolic protein complex that binds to dilysine motifs and reversibly associates with Golgi non-clathrin-coated vesicles, which further mediate biosynthetic protein transport from the ER, via the Golgi up to the trans Golgi network. Coatomer complex is required for budding from Golgi membranes, and is essential for the retrograde Golgi-to-ER transport of dilysine-tagged proteins. The protein is Coatomer subunit delta (RET2) of Saccharomyces cerevisiae (strain ATCC 204508 / S288c) (Baker's yeast).